Here is an 860-residue protein sequence, read N- to C-terminus: RNA-dependent RNA polymerase (860 aa).

The disordered stretch occupies residues 839-860 (PFSSSESDEPRAKEIGPNRGPE). Residues 846–860 (DEPRAKEIGPNRGPE) are compositionally biased toward basic and acidic residues.

This sequence belongs to the ssRNA positive-strand viruses RNA-directed RNA polymerase family.

It carries out the reaction RNA(n) + a ribonucleoside 5'-triphosphate = RNA(n+1) + diphosphate. Functionally, RNA-dependent RNA polymerase which replicates the viral genome. The chain is RNA-dependent RNA polymerase from Ourmia melon virus (isolate Melon/Iran/VE9) (OuMV).